Here is a 571-residue protein sequence, read N- to C-terminus: DNA primase (571 aa).

A CHC2-type zinc finger spans residues 20 to 44; it reads CPFHKEKTPSFQVDTEKGYYHCFGC. In terms of domain architecture, Toprim spans 229 to 309; that stretch reads AELVVVEGYM…KFRVRATSVP (81 aa). Positions 235, 280, and 282 each coordinate Mg(2+).

It belongs to the DnaG primase family. Monomer. Interacts with DnaB. It depends on Zn(2+) as a cofactor. Mg(2+) serves as cofactor.

It catalyses the reaction ssDNA + n NTP = ssDNA/pppN(pN)n-1 hybrid + (n-1) diphosphate.. In terms of biological role, RNA polymerase that catalyzes the synthesis of short RNA molecules used as primers for DNA polymerase during DNA replication. This is DNA primase from Deinococcus radiodurans (strain ATCC 13939 / DSM 20539 / JCM 16871 / CCUG 27074 / LMG 4051 / NBRC 15346 / NCIMB 9279 / VKM B-1422 / R1).